We begin with the raw amino-acid sequence, 253 residues long: Peptidase inhibitor R3HDML (253 aa).

The N-terminal stretch at 1–23 (MPLLSSIVGLTGLLLWMGHTVGA) is a signal peptide. Positions 24–56 (LRMPNTTLVQGRPKNTAVWPLSGLGVPRHRRKR) are excised as a propeptide. Residues asparagine 28 and asparagine 120 are each glycosylated (N-linked (GlcNAc...) asparagine). Residues 67 to 207 (LDYHNHIRAS…QQAVYLVCNY (141 aa)) form the SCP domain.

It belongs to the CRISP family.

It localises to the secreted. Functionally, putative serine protease inhibitor. In Mus musculus (Mouse), this protein is Peptidase inhibitor R3HDML (R3hdml).